The chain runs to 627 residues: (-)-beta-pinene synthase 1, chloroplastic (627 aa).

Residues 1-50 (MDLISVLPSTSKSCVCLHKPLSSSTHKLKPFCRTIRILGMPRPRKSVLMA) constitute a chloroplast transit peptide. Mg(2+) is bound by residues Asp-378, Asp-382, and Asp-530. A DDXXD motif motif is present at residues 378–382 (DDMYD).

It belongs to the terpene synthase family. Tpsd subfamily. Mg(2+) serves as cofactor. The cofactor is Mn(2+).

The protein resides in the plastid. It is found in the chloroplast. The catalysed reaction is (2E)-geranyl diphosphate = (1S,5S)-beta-pinene + diphosphate. The enzyme catalyses (2E)-geranyl diphosphate = (1S,5S)-alpha-pinene + diphosphate. It functions in the pathway terpene metabolism; oleoresin biosynthesis. It participates in secondary metabolite biosynthesis; terpenoid biosynthesis. Its function is as follows. Monoterpene synthase (TPS) involved in the biosynthesis of monoterpene natural products included in conifer oleoresin secretions and volatile emissions; these compounds contribute to biotic and abiotic stress defense against herbivores and pathogens. Catalyzes the conversion of (2E)-geranyl diphosphate (GPP) to (-)-beta-pinene and, to a lower extent, to (-)-alpha-pinene. This Pinus contorta (Shore pine) protein is (-)-beta-pinene synthase 1, chloroplastic.